The following is a 736-amino-acid chain: Phosphoribosylformylglycinamidine synthase subunit PurL (736 aa).

The active site involves histidine 50. Residues tyrosine 53 and lysine 92 each contribute to the ATP site. Glutamate 94 serves as a coordination point for Mg(2+). Substrate-binding positions include 95–98 (SHNH) and arginine 117. The active-site Proton acceptor is the histidine 96. Aspartate 118 contacts Mg(2+). A substrate-binding site is contributed by glutamine 241. Mg(2+) is bound at residue aspartate 269. 313 to 315 (ESQ) is a binding site for substrate. 2 residues coordinate ATP: aspartate 495 and glycine 532. Asparagine 533 is a Mg(2+) binding site. Position 535 (serine 535) interacts with substrate.

The protein belongs to the FGAMS family. Monomer. Part of the FGAM synthase complex composed of 1 PurL, 1 PurQ and 2 PurS subunits.

Its subcellular location is the cytoplasm. It carries out the reaction N(2)-formyl-N(1)-(5-phospho-beta-D-ribosyl)glycinamide + L-glutamine + ATP + H2O = 2-formamido-N(1)-(5-O-phospho-beta-D-ribosyl)acetamidine + L-glutamate + ADP + phosphate + H(+). The protein operates within purine metabolism; IMP biosynthesis via de novo pathway; 5-amino-1-(5-phospho-D-ribosyl)imidazole from N(2)-formyl-N(1)-(5-phospho-D-ribosyl)glycinamide: step 1/2. Its function is as follows. Part of the phosphoribosylformylglycinamidine synthase complex involved in the purines biosynthetic pathway. Catalyzes the ATP-dependent conversion of formylglycinamide ribonucleotide (FGAR) and glutamine to yield formylglycinamidine ribonucleotide (FGAM) and glutamate. The FGAM synthase complex is composed of three subunits. PurQ produces an ammonia molecule by converting glutamine to glutamate. PurL transfers the ammonia molecule to FGAR to form FGAM in an ATP-dependent manner. PurS interacts with PurQ and PurL and is thought to assist in the transfer of the ammonia molecule from PurQ to PurL. The sequence is that of Phosphoribosylformylglycinamidine synthase subunit PurL from Bartonella quintana (strain Toulouse) (Rochalimaea quintana).